The following is a 565-amino-acid chain: Arginine--tRNA ligase (565 aa).

A 'HIGH' region motif is present at residues 120 to 130 (PNIAKPFHVGH).

The protein belongs to the class-I aminoacyl-tRNA synthetase family. In terms of assembly, monomer.

It is found in the cytoplasm. The catalysed reaction is tRNA(Arg) + L-arginine + ATP = L-arginyl-tRNA(Arg) + AMP + diphosphate. In Clostridium perfringens (strain 13 / Type A), this protein is Arginine--tRNA ligase.